Consider the following 73-residue polypeptide: uncharacterized protein (73 aa).

This is an uncharacterized protein from Haemophilus influenzae (strain ATCC 51907 / DSM 11121 / KW20 / Rd).